Reading from the N-terminus, the 308-residue chain is tRNA dimethylallyltransferase (308 aa).

Glycine 14 to threonine 21 provides a ligand contact to ATP. Residue threonine 16 to threonine 21 participates in substrate binding. Interaction with substrate tRNA regions lie at residues aspartate 39–leucine 42, glutamine 163–arginine 167, and arginine 244–arginine 249.

It belongs to the IPP transferase family. Monomer. Mg(2+) serves as cofactor.

The catalysed reaction is adenosine(37) in tRNA + dimethylallyl diphosphate = N(6)-dimethylallyladenosine(37) in tRNA + diphosphate. In terms of biological role, catalyzes the transfer of a dimethylallyl group onto the adenine at position 37 in tRNAs that read codons beginning with uridine, leading to the formation of N6-(dimethylallyl)adenosine (i(6)A). This is tRNA dimethylallyltransferase from Shewanella oneidensis (strain ATCC 700550 / JCM 31522 / CIP 106686 / LMG 19005 / NCIMB 14063 / MR-1).